The primary structure comprises 214 residues: Small ribosomal subunit protein uS3c (214 aa).

One can recognise a KH type-2 domain in the interval 39 to 111 (IRTYLNKLAK…QITINVVEVE (73 aa)).

It belongs to the universal ribosomal protein uS3 family. As to quaternary structure, part of the 30S ribosomal subunit.

It is found in the plastid. The protein localises to the chloroplast. The sequence is that of Small ribosomal subunit protein uS3c (rps3) from Thalassiosira pseudonana (Marine diatom).